We begin with the raw amino-acid sequence, 130 residues long: UPF0102 protein Cthe_0758 (130 aa).

This sequence belongs to the UPF0102 family.

The polypeptide is UPF0102 protein Cthe_0758 (Acetivibrio thermocellus (strain ATCC 27405 / DSM 1237 / JCM 9322 / NBRC 103400 / NCIMB 10682 / NRRL B-4536 / VPI 7372) (Clostridium thermocellum)).